A 104-amino-acid polypeptide reads, in one-letter code: MHLTPREQEKLLIVVAADLARRRKDRGIRLNHPEAVAYITAEILEGAREGRTVTDLMAYGTTLLTYDDVMEGVPEMIRAVQVEATFPDGTKLVSVHDPIRRRLP.

It belongs to the urease gamma subunit family. In terms of assembly, heterotrimer of UreA (gamma), UreB (beta) and UreC (alpha) subunits. Three heterotrimers associate to form the active enzyme.

The protein resides in the cytoplasm. It carries out the reaction urea + 2 H2O + H(+) = hydrogencarbonate + 2 NH4(+). The protein operates within nitrogen metabolism; urea degradation; CO(2) and NH(3) from urea (urease route): step 1/1. This chain is Urease subunit gamma, found in Actinomyces naeslundii.